A 520-amino-acid chain; its full sequence is MTEISILNDVQKIIVLDYGSQYNQLIARRIREFGVFSELKSHKITAQELREINPIGIVLSGGPNSVYADNAFGIDPEIFELGIPILGICYGMQLITHKLGGKVVPAGQAGNREYGQSTLHLRETSKLFSGTPQEQLVLMSHGDAVTEIPEGFHLVGDSNDCPYAAIENTEKNLYGIQFHPEVRHSVYGNDILKNFAISICGARGDWSMDNFIDMEIAKIRETVGDRKVLLGLSGGVDSSVVGVLLQKAIGDQLTCIFVDHGLLRKDEGDQVMGMLGGKFGLNIIRVDASKRFLDLLADVEDPEKKRKIIGNEFVYVFDDEASKLKGVDFLAQGTLYTDIIESGTETAQTIKSHHNVGGLPEDMQFELIEPLNTLFKDEVRALGIALGMPEEIVWRQPFPGPGLAIRVMGPITEEKLETVRESDAILREEIAKAGLDRDVWQYFTVNTGVRSVGVMGDGRTYDYTIAIRAITSIDGMTADFAQLPWDVLKKISTRIVNEVDHVNRIVYDITSKPPATVEWE.

One can recognise a Glutamine amidotransferase type-1 domain in the interval 12–205; it reads KIIVLDYGSQ…AISICGARGD (194 aa). Catalysis depends on C89, which acts as the Nucleophile. Active-site residues include H179 and E181. One can recognise a GMPS ATP-PPase domain in the interval 206–395; it reads WSMDNFIDME…LGMPEEIVWR (190 aa). 233–239 is an ATP binding site; sequence SGGVDSS.

As to quaternary structure, homodimer.

The enzyme catalyses XMP + L-glutamine + ATP + H2O = GMP + L-glutamate + AMP + diphosphate + 2 H(+). Its pathway is purine metabolism; GMP biosynthesis; GMP from XMP (L-Gln route): step 1/1. Catalyzes the synthesis of GMP from XMP. The chain is GMP synthase [glutamine-hydrolyzing] from Streptococcus pyogenes serotype M6 (strain ATCC BAA-946 / MGAS10394).